We begin with the raw amino-acid sequence, 500 residues long: Organic cation/carnitine transporter 7 (500 aa).

The Cytoplasmic segment spans residues 1 to 23; that stretch reads MADGNTRFTVDEALVAMGFGKFQ. The chain crosses the membrane as a helical span at residues 24 to 44; the sequence is IYVLAYAGMGWVAEAMEMMLL. Topologically, residues 45-62 are extracellular; it reads SFVGPAVQSLWNLSARQE. Asn56 is a glycosylation site (N-linked (GlcNAc...) asparagine). The helical transmembrane segment at 63–83 threads the bilayer; the sequence is SLITSVVFAGMLIGAYSWGIV. Residues 84-97 are Cytoplasmic-facing; sequence SDKHGRRKGFIITA. The chain crosses the membrane as a helical span at residues 98–118; it reads VVTFVAGFLSAFSPNYMWLII. Residues 119-120 are Extracellular-facing; sequence LR. Residues 121–141 traverse the membrane as a helical segment; sequence CLVGLGLGGGPVLASWYLEFI. Residue 137-144 coordinates ATP; the sequence is YLEFIPAP. Residues 142 to 150 lie on the Cytoplasmic side of the membrane; the sequence is PAPSRGTWM. Residues 151 to 171 traverse the membrane as a helical segment; the sequence is VVFSAFWTVGTIFEASLAWLV. Over 172 to 174 the chain is Extracellular; sequence MPR. A helical transmembrane segment spans residues 175-195; that stretch reads LGWRWLLAFSSVPSSLLLLFY. Residues 196–293 are Cytoplasmic-facing; sequence RWTSESPRYL…ALLSPTLMKR (98 aa). The chain crosses the membrane as a helical span at residues 294–314; the sequence is TLLLWVVFFGNAFAYYGVVLL. The Extracellular portion of the chain corresponds to 315–341; that stretch reads TTELNNSHNRCYPTEKQLRNSNDVNYR. N-linked (GlcNAc...) asparagine glycosylation is present at Asn319. A helical membrane pass occupies residues 342-362; that stretch reads DVFIASFAEFPGLLISAAMVD. Over 363 to 367 the chain is Cytoplasmic; it reads RLGRK. The helical transmembrane segment at 368–387 threads the bilayer; that stretch reads ASMASMLFTCCIFLLPLLSH. Topologically, residues 388-401 are extracellular; the sequence is QSPFITTVLLFGGR. The helical transmembrane segment at 402-422 threads the bilayer; sequence ICISAAFTVVYIYAPEIYPTA. The Cytoplasmic portion of the chain corresponds to 423–429; it reads VRTTGVG. A helical transmembrane segment spans residues 430 to 450; that stretch reads VGSSVGRIGGILCPLVAVGLV. Topologically, residues 451–456 are extracellular; the sequence is HGCHQT. Residues 457 to 477 form a helical membrane-spanning segment; it reads IAVLLFEVVILVSGICVCLFP. Residues 478 to 500 lie on the Cytoplasmic side of the membrane; it reads FETSGRDLTDSISASKEPPSASV.

It belongs to the major facilitator (TC 2.A.1) superfamily. Organic cation transporter (TC 2.A.1.19) family. In terms of tissue distribution, expressed in pollen.

It localises to the membrane. Functionally, high affinity carnitine transporter involved in the active cellular uptake of carnitine. Also transports organic cations. In Arabidopsis thaliana (Mouse-ear cress), this protein is Organic cation/carnitine transporter 7 (OCT7).